Consider the following 61-residue polypeptide: Protein TfaX (61 aa).

Belongs to the tfa family.

Might play a role in cell growth during glycolysis. This Escherichia coli (strain K12) protein is Protein TfaX (tfaX).